The following is a 360-amino-acid chain: Phosphoserine aminotransferase (360 aa).

Arginine 42 provides a ligand contact to L-glutamate. Pyridoxal 5'-phosphate-binding residues include tryptophan 102, threonine 152, aspartate 171, and glutamine 194. N6-(pyridoxal phosphate)lysine is present on lysine 195. Residue 237-238 (NT) coordinates pyridoxal 5'-phosphate.

The protein belongs to the class-V pyridoxal-phosphate-dependent aminotransferase family. SerC subfamily. As to quaternary structure, homodimer. Pyridoxal 5'-phosphate is required as a cofactor.

Its subcellular location is the cytoplasm. The enzyme catalyses O-phospho-L-serine + 2-oxoglutarate = 3-phosphooxypyruvate + L-glutamate. It carries out the reaction 4-(phosphooxy)-L-threonine + 2-oxoglutarate = (R)-3-hydroxy-2-oxo-4-phosphooxybutanoate + L-glutamate. The protein operates within amino-acid biosynthesis; L-serine biosynthesis; L-serine from 3-phospho-D-glycerate: step 2/3. It participates in cofactor biosynthesis; pyridoxine 5'-phosphate biosynthesis; pyridoxine 5'-phosphate from D-erythrose 4-phosphate: step 3/5. In terms of biological role, catalyzes the reversible conversion of 3-phosphohydroxypyruvate to phosphoserine and of 3-hydroxy-2-oxo-4-phosphonooxybutanoate to phosphohydroxythreonine. The chain is Phosphoserine aminotransferase from Coxiella burnetii (strain RSA 493 / Nine Mile phase I).